The sequence spans 1212 residues: Nucleolar protein 6 (1212 aa).

Disordered regions lie at residues 1 to 72 and 1156 to 1212; these read MGKI…PVSI and KREQ…KSLS. Over residues 1197-1212 the composition is skewed to basic residues; the sequence is LKRKSLIKSRPLKSLS.

It belongs to the NRAP family. As to quaternary structure, part of the small subunit (SSU) processome, composed of more than 70 proteins and the RNA chaperone small nucleolar RNA (snoRNA) U3.

It localises to the nucleus. Its subcellular location is the nucleolus. It is found in the chromosome. Functionally, part of the small subunit (SSU) processome, first precursor of the small eukaryotic ribosomal subunit. During the assembly of the SSU processome in the nucleolus, many ribosome biogenesis factors, an RNA chaperone and ribosomal proteins associate with the nascent pre-rRNA and work in concert to generate RNA folding, modifications, rearrangements and cleavage as well as targeted degradation of pre-ribosomal RNA by the RNA exosome. This Drosophila persimilis (Fruit fly) protein is Nucleolar protein 6.